We begin with the raw amino-acid sequence, 197 residues long: MLPPIVLASQSPARRQLLEAARIPFRVQPSYFDESQIQSPDPVELVQKLAAAKAEAVAAQQREPVLVIGADSVLYLGGEILGKPANALEAERRLRQMRGEVGELYTGHALIDTRQNRRLVHYAVTRVFFAKPSDEEIRTYVATGEPLNCAGCFAIDGRGSLFVERIEGCPGNVIGLSLPLLRRMIQELGYSLTEAWN.

Asp-71 functions as the Proton acceptor in the catalytic mechanism.

The protein belongs to the Maf family. Requires a divalent metal cation as cofactor.

It is found in the cytoplasm. The catalysed reaction is a ribonucleoside 5'-triphosphate + H2O = a ribonucleoside 5'-phosphate + diphosphate + H(+). The enzyme catalyses a 2'-deoxyribonucleoside 5'-triphosphate + H2O = a 2'-deoxyribonucleoside 5'-phosphate + diphosphate + H(+). Nucleoside triphosphate pyrophosphatase. May have a dual role in cell division arrest and in preventing the incorporation of modified nucleotides into cellular nucleic acids. The protein is Nucleoside triphosphate pyrophosphatase of Synechococcus sp. (strain JA-3-3Ab) (Cyanobacteria bacterium Yellowstone A-Prime).